The primary structure comprises 627 residues: 1-deoxy-D-xylulose-5-phosphate synthase (627 aa).

Thiamine diphosphate contacts are provided by residues His-74 and Gly-115–Ala-117. Residue Asp-146 coordinates Mg(2+). Residues Ala-147–Ala-148, Asn-175, Phe-284, and Glu-364 contribute to the thiamine diphosphate site. Position 175 (Asn-175) interacts with Mg(2+).

Belongs to the transketolase family. DXPS subfamily. Homodimer. Mg(2+) serves as cofactor. Thiamine diphosphate is required as a cofactor.

The catalysed reaction is D-glyceraldehyde 3-phosphate + pyruvate + H(+) = 1-deoxy-D-xylulose 5-phosphate + CO2. It participates in metabolic intermediate biosynthesis; 1-deoxy-D-xylulose 5-phosphate biosynthesis; 1-deoxy-D-xylulose 5-phosphate from D-glyceraldehyde 3-phosphate and pyruvate: step 1/1. Catalyzes the acyloin condensation reaction between C atoms 2 and 3 of pyruvate and glyceraldehyde 3-phosphate to yield 1-deoxy-D-xylulose-5-phosphate (DXP). This chain is 1-deoxy-D-xylulose-5-phosphate synthase, found in Acidobacterium capsulatum (strain ATCC 51196 / DSM 11244 / BCRC 80197 / JCM 7670 / NBRC 15755 / NCIMB 13165 / 161).